Reading from the N-terminus, the 468-residue chain is Ubiquinone biosynthesis monooxygenase COQ6, mitochondrial (468 aa).

Residues 1–28 constitute a mitochondrion transit peptide; the sequence is MAARLVSRCGAVRAAPHSGPLVSWRRWS.

This sequence belongs to the UbiH/COQ6 family. As to quaternary structure, component of a multi-subunit COQ enzyme complex, composed of at least COQ3, COQ4, COQ5, COQ6, COQ7 and COQ9. Interacts with COQ8B and COQ7. It depends on FAD as a cofactor. Widely expressed.

It localises to the mitochondrion inner membrane. It is found in the golgi apparatus. The protein resides in the cell projection. It carries out the reaction 4-hydroxy-3-(all-trans-decaprenyl)benzoate + 2 reduced [2Fe-2S]-[ferredoxin] + O2 + 2 H(+) = 3,4-dihydroxy-5-(all-trans-decaprenyl)benzoate + 2 oxidized [2Fe-2S]-[ferredoxin] + H2O. It catalyses the reaction 2-methoxy-6-(all-trans-decaprenyl)phenol + 2 reduced [2Fe-2S]-[ferredoxin] + O2 + 2 H(+) = 2-methoxy-6-(all-trans-decaprenyl)benzene-1,4-diol + 2 oxidized [2Fe-2S]-[ferredoxin] + H2O. The protein operates within cofactor biosynthesis; ubiquinone biosynthesis. FAD-dependent monooxygenase required for two non-consecutive steps during ubiquinone biosynthesis. Required for the C5-ring hydroxylation during ubiquinone biosynthesis by catalyzing the hydroxylation of 4-hydroxy-3-(all-trans-decaprenyl)benzoic acid to 3,4-dihydroxy-5-(all-trans-decaprenyl)benzoic acid. Also acts downstream of COQ4, for the C1-hydroxylation during ubiquinone biosynthesis by catalyzing the hydroxylation of 2-methoxy-6-(all-trans-decaprenyl)phenol to 2-methoxy-6-(all-trans-decaprenyl)benzene-1,4-diol. The electrons required for the hydroxylation reaction are funneled indirectly to COQ6 from NADPH via a ferredoxin/ferredoxin reductase system composed of FDX2 and FDXR. The chain is Ubiquinone biosynthesis monooxygenase COQ6, mitochondrial from Homo sapiens (Human).